The sequence spans 124 residues: Small ribosomal subunit protein bS16 (124 aa).

Positions 82-124 (LAKRPARSNPTKAVPGKKAQERAAEAKQKAEDAAAAAAESAAE) are disordered. Residues 99–113 (KAQERAAEAKQKAED) are compositionally biased toward basic and acidic residues. The span at 114-124 (AAAAAAESAAE) shows a compositional bias: low complexity.

It belongs to the bacterial ribosomal protein bS16 family.

This is Small ribosomal subunit protein bS16 from Sinorhizobium fredii (strain NBRC 101917 / NGR234).